The primary structure comprises 104 residues: SOSS complex subunit C (104 aa).

N-acetylalanine is present on Ala2.

The protein belongs to the SOSS-C family. In terms of assembly, component of the SOSS complex, composed of SOSS-B (SOSS-B1/NABP2 or SOSS-B2/NABP1), SOSS-A/INTS3 and SOSS-C/INIP. SOSS complexes containing SOSS-B1/NABP2 are more abundant than complexes containing SOSS-B2/NABP1. Interacts with INTS3; the interaction is direct.

The protein resides in the nucleus. In terms of biological role, component of the SOSS complex, a multiprotein complex that functions downstream of the MRN complex to promote DNA repair and G2/M checkpoint. The SOSS complex associates with single-stranded DNA at DNA lesions and influences diverse endpoints in the cellular DNA damage response including cell-cycle checkpoint activation, recombinational repair and maintenance of genomic stability. Required for efficient homologous recombination-dependent repair of double-strand breaks (DSBs) and ATM-dependent signaling pathways. This is SOSS complex subunit C (INIP) from Bos taurus (Bovine).